A 1368-amino-acid chain; its full sequence is DNA-directed RNA polymerase subunit beta (1368 aa).

The protein belongs to the RNA polymerase beta chain family. The RNAP catalytic core consists of 2 alpha, 1 beta, 1 beta' and 1 omega subunit. When a sigma factor is associated with the core the holoenzyme is formed, which can initiate transcription.

The enzyme catalyses RNA(n) + a ribonucleoside 5'-triphosphate = RNA(n+1) + diphosphate. Functionally, DNA-dependent RNA polymerase catalyzes the transcription of DNA into RNA using the four ribonucleoside triphosphates as substrates. The polypeptide is DNA-directed RNA polymerase subunit beta (Burkholderia ambifaria (strain MC40-6)).